The following is a 210-amino-acid chain: Ribosomal RNA small subunit methyltransferase G (210 aa).

S-adenosyl-L-methionine contacts are provided by residues Gly76, Leu81, 127 to 128 (VE), and Arg142.

Belongs to the methyltransferase superfamily. RNA methyltransferase RsmG family.

Its subcellular location is the cytoplasm. It catalyses the reaction guanosine(527) in 16S rRNA + S-adenosyl-L-methionine = N(7)-methylguanosine(527) in 16S rRNA + S-adenosyl-L-homocysteine. Its function is as follows. Specifically methylates the N7 position of guanine in position 527 of 16S rRNA. This is Ribosomal RNA small subunit methyltransferase G from Aliivibrio fischeri (strain ATCC 700601 / ES114) (Vibrio fischeri).